We begin with the raw amino-acid sequence, 229 residues long: Platelet-activating factor acetylhydrolase IB subunit alpha2 (229 aa).

Ser2 bears the N-acetylserine mark. Phosphoserine is present on Ser2. Ser48 is a catalytic residue. Ser64 carries the phosphoserine modification. Residues Asp193 and His196 contribute to the active site. Position 220 is a phosphothreonine (Thr220).

The protein belongs to the 'GDSL' lipolytic enzyme family. Platelet-activating factor acetylhydrolase IB beta/gamma subunits subfamily. Forms a catalytic dimer which is either homodimer (alpha2/alpha2 homodimer) or heterodimer with PAFAH1B3 (alpha2/alpha1 heterodimer). Component of the cytosolic (PAF-AH (I)) heterotetrameric enzyme, which is composed of PAFAH1B1 (beta), PAFAH1B2 (alpha2) and PAFAH1B3 (alpha1) subunits. The catalytic activity of the enzyme resides in the alpha1 (PAFAH1B3) and alpha2 (PAFAH1B2) subunits, whereas the beta subunit (PAFAH1B1) has regulatory activity. Trimer formation is not essential for the catalytic activity. Interacts (homodimer form) with PAFAH1B1 (homodimer form); PAFAH1B2 competes with NDEL1 for PAFAH1B1 binding. Interacts with VLDLR; this interaction may modulate the Reelin pathway.

It localises to the cytoplasm. The catalysed reaction is a 1-O-alkyl-2-acetyl-sn-glycero-3-phosphocholine + H2O = a 1-O-alkyl-sn-glycero-3-phosphocholine + acetate + H(+). It catalyses the reaction 1-O-hexadecyl-2-acetyl-sn-glycero-3-phosphocholine + H2O = 1-O-hexadecyl-sn-glycero-3-phosphocholine + acetate + H(+). The enzyme catalyses 1-O-hexadecyl-2-acetyl-sn-glycero-3-phosphate + H2O = 1-O-hexadecyl-sn-glycero-3-phosphate + acetate + H(+). It carries out the reaction 1-O-hexadecyl-2-acetyl-sn-glycero-3-phosphoethanolamine + H2O = 1-O-hexadecyl-sn-glycero-3-phosphoethanolamine + acetate + H(+). Beta subunit (PAFAH1B1) stimulates the acetylhydrolase activity of the alpha2/alpha2 catalytic homodimer. Its function is as follows. Alpha2 catalytic subunit of the cytosolic type I platelet-activating factor (PAF) acetylhydrolase (PAF-AH (I)) heterotetrameric enzyme that catalyzes the hydrolyze of the acetyl group at the sn-2 position of PAF and its analogs and modulates the action of PAF. The activity and substrate specificity of PAF-AH (I) are affected by its subunit composition. The alpha2/alpha2 homodimer (PAFAH1B2/PAFAH1B2 homodimer) hydrolyzes PAF and 1-O-alkyl-2-acetyl-sn-glycero-3-phosphorylethanolamine (AAGPE) more efficiently than 1-O-alkyl-2-acetyl-sn-glycero-3-phosphoric acid (AAGPA). In contrast, the alpha1/alpha2 heterodimer(PAFAH1B3/PAFAH1B3 heterodimer) hydrolyzes AAGPA more efficiently than PAF, but has little hydrolytic activity towards AAGPE. May play a role in male germ cell meiosis during the late pachytenestage and meiotic divisions as well as early spermiogenesis. In Pongo abelii (Sumatran orangutan), this protein is Platelet-activating factor acetylhydrolase IB subunit alpha2.